Reading from the N-terminus, the 442-residue chain is D-serine dehydratase 1 (442 aa).

Position 118 is an N6-(pyridoxal phosphate)lysine (K118).

Belongs to the serine/threonine dehydratase family. DsdA subfamily. As to quaternary structure, monomer. Pyridoxal 5'-phosphate is required as a cofactor.

It carries out the reaction D-serine = pyruvate + NH4(+). The chain is D-serine dehydratase 1 from Escherichia coli O6:K15:H31 (strain 536 / UPEC).